The primary structure comprises 277 residues: 2-dehydro-3-deoxyphosphooctonate aldolase (277 aa).

This sequence belongs to the KdsA family.

It localises to the cytoplasm. The enzyme catalyses D-arabinose 5-phosphate + phosphoenolpyruvate + H2O = 3-deoxy-alpha-D-manno-2-octulosonate-8-phosphate + phosphate. Its pathway is carbohydrate biosynthesis; 3-deoxy-D-manno-octulosonate biosynthesis; 3-deoxy-D-manno-octulosonate from D-ribulose 5-phosphate: step 2/3. It participates in bacterial outer membrane biogenesis; lipopolysaccharide biosynthesis. This is 2-dehydro-3-deoxyphosphooctonate aldolase from Brucella anthropi (strain ATCC 49188 / DSM 6882 / CCUG 24695 / JCM 21032 / LMG 3331 / NBRC 15819 / NCTC 12168 / Alc 37) (Ochrobactrum anthropi).